The chain runs to 230 residues: Probable dual specificity protein phosphatase DDB_G0283417 (230 aa).

Residues 78–230 (NNNYESINLY…LEIFEKELLF (153 aa)) form the Tyrosine-protein phosphatase domain. Catalysis depends on Cys-174, which acts as the Phosphocysteine intermediate.

It belongs to the protein-tyrosine phosphatase family. Non-receptor class dual specificity subfamily.

It carries out the reaction O-phospho-L-tyrosyl-[protein] + H2O = L-tyrosyl-[protein] + phosphate. The enzyme catalyses O-phospho-L-seryl-[protein] + H2O = L-seryl-[protein] + phosphate. The catalysed reaction is O-phospho-L-threonyl-[protein] + H2O = L-threonyl-[protein] + phosphate. In terms of biological role, has a dual specificity toward Ser/Thr and Tyr-containing proteins. In Dictyostelium discoideum (Social amoeba), this protein is Probable dual specificity protein phosphatase DDB_G0283417.